Reading from the N-terminus, the 154-residue chain is 6,7-dimethyl-8-ribityllumazine synthase (154 aa).

Residues Phe21, 55–57 (AFE), and 79–81 (CVI) contribute to the 5-amino-6-(D-ribitylamino)uracil site. 84-85 (AT) contributes to the (2S)-2-hydroxy-3-oxobutyl phosphate binding site. His87 functions as the Proton donor in the catalytic mechanism. Phe112 lines the 5-amino-6-(D-ribitylamino)uracil pocket. Residue Arg126 coordinates (2S)-2-hydroxy-3-oxobutyl phosphate.

Belongs to the DMRL synthase family. Forms an icosahedral capsid composed of 60 subunits, arranged as a dodecamer of pentamers.

The enzyme catalyses (2S)-2-hydroxy-3-oxobutyl phosphate + 5-amino-6-(D-ribitylamino)uracil = 6,7-dimethyl-8-(1-D-ribityl)lumazine + phosphate + 2 H2O + H(+). Its pathway is cofactor biosynthesis; riboflavin biosynthesis; riboflavin from 2-hydroxy-3-oxobutyl phosphate and 5-amino-6-(D-ribitylamino)uracil: step 1/2. Its function is as follows. Catalyzes the formation of 6,7-dimethyl-8-ribityllumazine by condensation of 5-amino-6-(D-ribitylamino)uracil with 3,4-dihydroxy-2-butanone 4-phosphate. This is the penultimate step in the biosynthesis of riboflavin. This Staphylococcus aureus (strain Mu50 / ATCC 700699) protein is 6,7-dimethyl-8-ribityllumazine synthase.